The following is a 460-amino-acid chain: V-type ATP synthase beta chain (460 aa).

This sequence belongs to the ATPase alpha/beta chains family.

In terms of biological role, produces ATP from ADP in the presence of a proton gradient across the membrane. The V-type beta chain is a regulatory subunit. In Anaeromyxobacter sp. (strain Fw109-5), this protein is V-type ATP synthase beta chain.